A 440-amino-acid polypeptide reads, in one-letter code: MSLITDIYAREVLDSRGNPTVEAEVYTEAGGVGRGIVPSGASTGEHEAVELRDGDKDRFGGKGVLKAVANVNNVIAKEIVGMEVTDQIAIDKAMIALDGTPNKGKLGANAILAVSLATARAAADELQVPLYNYLGGFNAHVMPTPMMNVINGGAHSDNKVDFQEFMIMPVGAPTVREAIRMGSETFHALKKALEADGKVTSVGDEGGFAPDFANNEEPFEYLIKAIEAAGYKPGKDVAIAFDVAASELWNDEDKKYKLHWSTGEEYTTEEWIEYLSDIIAKYPVVSVEDPIDENNWDDWVTLTNKLGKKVQLVGDDFFVTNTDYLAKGIKMGAANSILIKLNQIGTLTETVEAIEMAKEAGYTAIVSHRSGETEDTTIADLVVATNAGQIKTGSMSRTDRLAKYNQLMRIEDNLGDVAKYKGIRSFYNLSEQAKQDIENR.

Residue Gln163 coordinates (2R)-2-phosphoglycerate. Catalysis depends on Glu205, which acts as the Proton donor. Mg(2+)-binding residues include Asp242, Glu288, and Asp315. (2R)-2-phosphoglycerate contacts are provided by Lys340, Arg369, Ser370, and Lys391. The Proton acceptor role is filled by Lys340.

Belongs to the enolase family. The cofactor is Mg(2+).

The protein localises to the cytoplasm. Its subcellular location is the secreted. The protein resides in the cell surface. The catalysed reaction is (2R)-2-phosphoglycerate = phosphoenolpyruvate + H2O. The protein operates within carbohydrate degradation; glycolysis; pyruvate from D-glyceraldehyde 3-phosphate: step 4/5. Functionally, catalyzes the reversible conversion of 2-phosphoglycerate (2-PG) into phosphoenolpyruvate (PEP). It is essential for the degradation of carbohydrates via glycolysis. The polypeptide is Enolase (Limosilactobacillus fermentum (strain NBRC 3956 / LMG 18251) (Lactobacillus fermentum)).